The sequence spans 99 residues: Protein Frey (99 aa).

The helical transmembrane segment at alanine 13–leucine 29 threads the bilayer. The interval arginine 64–methionine 90 is disordered.

In terms of assembly, interacts with SPPL2C (via active sites); the interaction stabilizes FREY1 protein and inhibits SPPL2C proteolytic activity. Interacts with IZUMO1; the interaction retains IZUMO1 at the endoplasmic reticulum membrane and coordinates IZUMO1 complex assembly.

It localises to the endoplasmic reticulum membrane. Functionally, key regulator for male fertility expressed transiently in round spermatids where it recruits IZUMO1 at the endoplasmic reticulum (ER) membrane and coordinates the oolemmal binding multimeric complex (IZUMO1 complex) assembly. Upon complete assembly of the IZUMO1 complex, its ER retention is released, facilitating IZUMO1 complex export to the acrosome. Through the interaction with SPPL2C, inhibits its intramembrane protease activity directly accessing the catalytic center of an I-CLiP. The sequence is that of Protein Frey (FREY1) from Bos taurus (Bovine).